Consider the following 378-residue polypeptide: Erythronate-4-phosphate dehydrogenase (378 aa).

Positions 45 and 67 each coordinate substrate. NAD(+) is bound at residue Asp147. Arg209 is an active-site residue. NAD(+) is bound at residue Asp233. The active site involves Glu238. His255 (proton donor) is an active-site residue. NAD(+) is bound at residue Gly258. Residue Tyr259 participates in substrate binding.

Belongs to the D-isomer specific 2-hydroxyacid dehydrogenase family. PdxB subfamily. Homodimer.

It is found in the cytoplasm. The catalysed reaction is 4-phospho-D-erythronate + NAD(+) = (R)-3-hydroxy-2-oxo-4-phosphooxybutanoate + NADH + H(+). It functions in the pathway cofactor biosynthesis; pyridoxine 5'-phosphate biosynthesis; pyridoxine 5'-phosphate from D-erythrose 4-phosphate: step 2/5. Its function is as follows. Catalyzes the oxidation of erythronate-4-phosphate to 3-hydroxy-2-oxo-4-phosphonooxybutanoate. This Shewanella denitrificans (strain OS217 / ATCC BAA-1090 / DSM 15013) protein is Erythronate-4-phosphate dehydrogenase.